The primary structure comprises 298 residues: uncharacterized protein (298 aa).

Residues 1-19 (MFRKFLFIQLLIVTSLVKA) form the signal peptide. The segment at 278–298 (RNNPPLKNNNAKSKNSYETYK) is disordered. Over residues 279–298 (NNPPLKNNNAKSKNSYETYK) the composition is skewed to low complexity.

The protein to R.prowazekii RP296.

This is an uncharacterized protein from Rickettsia prowazekii (strain Madrid E).